The following is a 365-amino-acid chain: 25S rRNA (uridine(2843)-N(3))-methyltransferase (365 aa).

Belongs to the class I-like SAM-binding methyltransferase superfamily.

The protein resides in the cytoplasm. The protein localises to the nucleus. The enzyme catalyses uridine(2843) in 25S rRNA + S-adenosyl-L-methionine = N(3)-methyluridine(2843) in 25S rRNA + S-adenosyl-L-homocysteine + H(+). Functionally, S-adenosyl-L-methionine-dependent methyltransferase that specifically methylates the N(3) position of uridine 2843 (m3U2843) in 25S rRNA. The chain is 25S rRNA (uridine(2843)-N(3))-methyltransferase (BMT6) from Saccharomyces cerevisiae (strain ATCC 204508 / S288c) (Baker's yeast).